We begin with the raw amino-acid sequence, 427 residues long: Glutamate-1-semialdehyde 2,1-aminomutase (427 aa).

Lys-265 is subject to N6-(pyridoxal phosphate)lysine.

Belongs to the class-III pyridoxal-phosphate-dependent aminotransferase family. HemL subfamily. As to quaternary structure, homodimer. The cofactor is pyridoxal 5'-phosphate.

The protein localises to the cytoplasm. The catalysed reaction is (S)-4-amino-5-oxopentanoate = 5-aminolevulinate. The protein operates within porphyrin-containing compound metabolism; protoporphyrin-IX biosynthesis; 5-aminolevulinate from L-glutamyl-tRNA(Glu): step 2/2. The protein is Glutamate-1-semialdehyde 2,1-aminomutase of Burkholderia cenocepacia (strain HI2424).